The primary structure comprises 374 residues: S-adenosylmethionine:tRNA ribosyltransferase-isomerase (374 aa).

This sequence belongs to the QueA family. Monomer.

The protein localises to the cytoplasm. It carries out the reaction 7-aminomethyl-7-carbaguanosine(34) in tRNA + S-adenosyl-L-methionine = epoxyqueuosine(34) in tRNA + adenine + L-methionine + 2 H(+). It participates in tRNA modification; tRNA-queuosine biosynthesis. In terms of biological role, transfers and isomerizes the ribose moiety from AdoMet to the 7-aminomethyl group of 7-deazaguanine (preQ1-tRNA) to give epoxyqueuosine (oQ-tRNA). This Sorangium cellulosum (strain So ce56) (Polyangium cellulosum (strain So ce56)) protein is S-adenosylmethionine:tRNA ribosyltransferase-isomerase.